We begin with the raw amino-acid sequence, 708 residues long: Polyribonucleotide nucleotidyltransferase (708 aa).

Mg(2+) contacts are provided by D488 and D494. The KH domain maps to 555–614 (PRIYTMKIPQKKIAEVIGKGGATIRQLTEETGTTIEIGDDGTIKIAATDGESAANAISRI). In terms of domain architecture, S1 motif spans 624–692 (GTIYEGKVVR…RQGRVRLSIK (69 aa)).

Belongs to the polyribonucleotide nucleotidyltransferase family. Component of the RNA degradosome, which is a multiprotein complex involved in RNA processing and mRNA degradation. Requires Mg(2+) as cofactor.

Its subcellular location is the cytoplasm. It catalyses the reaction RNA(n+1) + phosphate = RNA(n) + a ribonucleoside 5'-diphosphate. In terms of biological role, involved in mRNA degradation. Catalyzes the phosphorolysis of single-stranded polyribonucleotides processively in the 3'- to 5'-direction. The polypeptide is Polyribonucleotide nucleotidyltransferase (Pseudoalteromonas translucida (strain TAC 125)).